The following is a 284-amino-acid chain: Tropomyosin (284 aa).

2 disordered regions span residues 1 to 27 (MDAI…QMEQ) and 99 to 131 (YERS…KVLE). Residues 1-273 (MDAIKKKMQA…KERYKAISDD (273 aa)) are a coiled coil. Positions 102-131 (SEEKLNSTTEKLEEASKAADESERNRKVLE) are enriched in basic and acidic residues.

This sequence belongs to the tropomyosin family. As to quaternary structure, homodimer.

Its function is as follows. Tropomyosin, in association with the troponin complex, plays a central role in the calcium dependent regulation of muscle contraction. The polypeptide is Tropomyosin (Mimachlamys nobilis (Noble scallop)).